A 103-amino-acid polypeptide reads, in one-letter code: Large ribosomal subunit protein uL24 (103 aa).

It belongs to the universal ribosomal protein uL24 family. Part of the 50S ribosomal subunit.

One of two assembly initiator proteins, it binds directly to the 5'-end of the 23S rRNA, where it nucleates assembly of the 50S subunit. Functionally, one of the proteins that surrounds the polypeptide exit tunnel on the outside of the subunit. This chain is Large ribosomal subunit protein uL24, found in Brucella ovis (strain ATCC 25840 / 63/290 / NCTC 10512).